We begin with the raw amino-acid sequence, 112 residues long: Protein SMALL AUXIN UP-REGULATED RNA 10 (112 aa).

This sequence belongs to the ARG7 family. In terms of tissue distribution, confined to the veins and petioles of rosette leaves and cauline leaves, and specifically expressed at the abaxial side of inflorescence branche; relocates to both the adaxial (Ad) and abaxial (Ab) sides of the branch in reduced red:far-red (R:FR) light, during shade. Also present in flowers.

It is found in the cell membrane. Its function is as follows. Provide a mechanistic link between auxin and plasma membrane H(+)-ATPases (PM H(+)-ATPases, e.g. AHA1 and AHA2), and triggers PM H(+)-ATPases activity by promoting phosphorylation of their C-terminal autoinhibitory domain as a result of PP2C-D subfamily of type 2C phosphatases inhibition, thus leading to the acidification of the apoplast and the facilitation of solutes and water uptake to drive cell expansion. Triggers plant growth probably by promoting cell elongation. Regulates branch angles and bending. The sequence is that of Protein SMALL AUXIN UP-REGULATED RNA 10 from Arabidopsis thaliana (Mouse-ear cress).